A 490-amino-acid chain; its full sequence is Trigger factor (490 aa).

In terms of domain architecture, PPIase FKBP-type spans 161–247 (GDQVIVDIEA…VHEVKEAELP (87 aa)). The span at 441 to 460 (AEPAEGTEPAAEEAVTAPEV) shows a compositional bias: low complexity. The tract at residues 441 to 490 (AEPAEGTEPAAEEAVTAPEVVDGETTPASESAESLAVTETGSRADDDQAS) is disordered. Polar residues predominate over residues 466–481 (TPASESAESLAVTETG).

Belongs to the FKBP-type PPIase family. Tig subfamily.

The protein localises to the cytoplasm. It catalyses the reaction [protein]-peptidylproline (omega=180) = [protein]-peptidylproline (omega=0). In terms of biological role, involved in protein export. Acts as a chaperone by maintaining the newly synthesized protein in an open conformation. Functions as a peptidyl-prolyl cis-trans isomerase. This is Trigger factor from Thermomicrobium roseum (strain ATCC 27502 / DSM 5159 / P-2).